The sequence spans 684 residues: MSISITLHRSGTSRTQQVDTTTTGLDLFGSDRAVVAMRVDGNLVDLQRELHDGAEVEPVEATSEDGLNIIRHSATHVMAQAVQQLYPEVNLGIGPFITDGFYYDFGNIEPVTPEVLSELEKRMKRIVKENQRFVRRVTTEESAREELADQPYKLELIGTKGKGAEGASVEVGGGELTIYDNVRRNGEVAWKDLCRGPHVPSTKYLANTFALTKFSAAYWKGDQANDQLQRIYGTAWASREGLAAYQQRIKEAERRDHRKLGAELDLFSFPEEIGPGLVVFHPKGAMLRHLIEEHVIARHMEAGFNFVHTPEITKGGLFHTSGHLPYYADTMFPPMLVDEERDEEGNVTRAGQEYYLKAMNCPMHNLIFRSRGRSYRELPLRFFEMGHDYRYEKSGVVHGLTRMRGFAQDDSHTYCTREQAPGEIKKQIEFFLSILADFGLNDFYLELSTRESDSAKKEKFIGSDEDWQVATDTLDQVCRSTGLQLVPDPGGAAFYGPKVSVQVRDAIGRTWQMSTIQYDFNQPERFDLEYAAADGTHQRPIMLHSAKLGSVERFIGVLTEHYAGAFPVWLSPVQVRLVPVAEAFNDYVTGFAEVLGSRGIRVETDLSSDRFGKKIRNASKDKVPFILIAGGEDAEAGAVSFRLRDGSQVNGVVLDEAVRIIAAWDSRHRNDDPTAETLRGVVDD.

The region spanning 1–60 (MSISITLHRSGTSRTQQVDTTTTGLDLFGSDRAVVAMRVDGNLVDLQRELHDGAEVEPVE) is the TGS domain. A catalytic region spans residues 256 to 567 (DHRKLGAELD…LTEHYAGAFP (312 aa)). Cys361, His412, and His544 together coordinate Zn(2+).

This sequence belongs to the class-II aminoacyl-tRNA synthetase family. As to quaternary structure, homodimer. Zn(2+) serves as cofactor.

The protein localises to the cytoplasm. The enzyme catalyses tRNA(Thr) + L-threonine + ATP = L-threonyl-tRNA(Thr) + AMP + diphosphate + H(+). Functionally, catalyzes the attachment of threonine to tRNA(Thr) in a two-step reaction: L-threonine is first activated by ATP to form Thr-AMP and then transferred to the acceptor end of tRNA(Thr). Also edits incorrectly charged L-seryl-tRNA(Thr). This chain is Threonine--tRNA ligase, found in Cutibacterium acnes (strain DSM 16379 / KPA171202) (Propionibacterium acnes).